The following is a 390-amino-acid chain: 3,5-dihydroxybiphenyl synthase (390 aa).

The active site involves Cys161.

This sequence belongs to the thiolase-like superfamily. Chalcone/stilbene synthases family. In terms of assembly, homodimer.

The catalysed reaction is benzoyl-CoA + 3 malonyl-CoA + 3 H(+) = biphenyl-3,5-diol + 4 CO2 + 4 CoA. In terms of biological role, type III polyketide synthase involved in the biosynthesis of the phytoalexins bisphenyls and dibenzofurans. Can also use salicoyl-CoA and malonyl-CoA to produce a diketide intermediate yielding 4-hydroxycoumarin after cyclization and enolization. Can also use m-hydroxybenzoyl-CoA as substrate, producing m-hydroxybenzoyl diacetic acid lactone as a derailment product. No activity with p-hydroxybenzoyl-CoA, CoA-linked cinnamic acids or acetyl-CoA. The chain is 3,5-dihydroxybiphenyl synthase (BIS1) from Sorbus aucuparia (European mountain ash).